We begin with the raw amino-acid sequence, 247 residues long: MSDPLILIPARLAATRLPSKPLADIAGVPMIVHVWRRAVEAGIGPVVVATDTDAVAEVIEARGGLAVMTRPDHPSGSDRLAEALEIVDPDGNHDVVVNVQGDLPTIDPAIIAASVMPLADPQVDIATLCAVIHRPEEMDDPNVVKIIGHTVGPNRLRALAFTRARAPWGDGPLFHHIGLYAYRRKALARFVALPQGELEQREKLEQLRALEAGMRIDAMIVEDLPLGVDTPADLERARTLLAIRRLN.

It belongs to the KdsB family.

Its subcellular location is the cytoplasm. It catalyses the reaction 3-deoxy-alpha-D-manno-oct-2-ulosonate + CTP = CMP-3-deoxy-beta-D-manno-octulosonate + diphosphate. The protein operates within nucleotide-sugar biosynthesis; CMP-3-deoxy-D-manno-octulosonate biosynthesis; CMP-3-deoxy-D-manno-octulosonate from 3-deoxy-D-manno-octulosonate and CTP: step 1/1. Its pathway is bacterial outer membrane biogenesis; lipopolysaccharide biosynthesis. Functionally, activates KDO (a required 8-carbon sugar) for incorporation into bacterial lipopolysaccharide in Gram-negative bacteria. The protein is 3-deoxy-manno-octulosonate cytidylyltransferase of Methylorubrum extorquens (strain CM4 / NCIMB 13688) (Methylobacterium extorquens).